The sequence spans 170 residues: Large ribosomal subunit protein uL15 (170 aa).

A compositionally biased stretch (basic and acidic residues) spans 1–12 (MKLHDLRPAEGS). Residues 1–50 (MKLHDLRPAEGSHRKRKRIGRGHGSGKVKTGGKGMMGQKARSGPGPYRTF) are disordered. Over residues 13-26 (HRKRKRIGRGHGSG) the composition is skewed to basic residues.

It belongs to the universal ribosomal protein uL15 family. As to quaternary structure, part of the 50S ribosomal subunit.

In terms of biological role, binds to the 23S rRNA. This chain is Large ribosomal subunit protein uL15, found in Chloroflexus aggregans (strain MD-66 / DSM 9485).